The chain runs to 137 residues: Probable leaf thionin (137 aa).

The N-terminal stretch at 1 to 28 (MATNKSIKSVVICVLILGLVLEQVQVEG) is a signal peptide. Disulfide bonds link Cys-31–Cys-68, Cys-32–Cys-60, Cys-40–Cys-58, and Cys-44–Cys-54. The propeptide at 75–137 (LNLLPESGEP…DGDVIQSVEA (63 aa)) is acidic domain.

This sequence belongs to the plant thionin (TC 1.C.44) family. 4 C-C subfamily.

Its subcellular location is the secreted. In terms of biological role, thionins are small plant proteins which are toxic to animal cells. They seem to exert their toxic effect at the level of the cell membrane. Their precise function is not known. This chain is Probable leaf thionin, found in Hordeum vulgare (Barley).